The primary structure comprises 277 residues: Pantothenate synthetase (277 aa).

An ATP-binding site is contributed by M26–H33. H33 serves as the catalytic Proton donor. Q57 is a (R)-pantoate binding site. Q57 serves as a coordination point for beta-alanine. ATP is bound at residue G144–D147. Q150 is a binding site for (R)-pantoate. ATP contacts are provided by residues G173 and L181 to R184.

Belongs to the pantothenate synthetase family. As to quaternary structure, homodimer.

Its subcellular location is the cytoplasm. It catalyses the reaction (R)-pantoate + beta-alanine + ATP = (R)-pantothenate + AMP + diphosphate + H(+). Its pathway is cofactor biosynthesis; (R)-pantothenate biosynthesis; (R)-pantothenate from (R)-pantoate and beta-alanine: step 1/1. Its function is as follows. Catalyzes the condensation of pantoate with beta-alanine in an ATP-dependent reaction via a pantoyl-adenylate intermediate. This is Pantothenate synthetase from Laribacter hongkongensis (strain HLHK9).